Consider the following 109-residue polypeptide: MSLTADPPACTVPAAGGSSTHKLVNGGADKLIFKIKSSNNNEYRIVPVFGFVDPSGSKDVVITRTAGAPKEDKLVVHFAPAPADATDAQAAFAAVTPAGTVTIPMSATA.

Positions 2–109 (SLTADPPACT…TVTIPMSATA (108 aa)) constitute an MSP domain.

As to expression, expressed at higher level in testis.

This Caenorhabditis elegans protein is Sperm-specific class P protein 16 (ssp-16).